Reading from the N-terminus, the 185-residue chain is Photosystem I assembly protein Ycf4 (185 aa).

Helical transmembrane passes span Asn-21–Tyr-43 and Gly-63–Leu-85.

It belongs to the Ycf4 family.

The protein resides in the plastid. It is found in the chloroplast thylakoid membrane. Its function is as follows. Seems to be required for the assembly of the photosystem I complex. This Brassica oleracea (Wild cabbage) protein is Photosystem I assembly protein Ycf4.